The following is a 570-amino-acid chain: MFS-type transporter ptmT (570 aa).

Residues 1–11 (MPDSGNIQLDT) are compositionally biased toward polar residues. Residues 1 to 34 (MPDSGNIQLDTLQHKDHSQETTSHYEGGSQLPEQ) are disordered. 14 consecutive transmembrane segments (helical) span residues 50–70 (GLIR…CVGL), 94–114 (WYVS…GKIY), 121–141 (WTYL…AITP), 151–171 (AISG…LSNI), 182–202 (AFIG…GGVF), 210–230 (WCFY…FLFM), 247–267 (GLDW…LLAL), 278–298 (NVRI…WLLI), 323–343 (IYTI…PIWF), 356–376 (IMNL…SVLI), 379–399 (VGYM…GAGL), 413–433 (IGYQ…PLLV), 445–465 (VATA…SAIA), and 517–537 (VTHT…GAFI). The N-linked (GlcNAc...) asparagine glycan is linked to Asn541. The interval 550–570 (PEPLVPGGSHSGAERDSKNGT) is disordered. Basic and acidic residues predominate over residues 561–570 (GAERDSKNGT).

It belongs to the major facilitator superfamily. TCR/Tet family.

It is found in the cell membrane. In terms of biological role, MFS-type transporter; part of the gene cluster that mediates the biosynthesis of the indole diterpenes penitrems. May be involved in the efflux of penitrems. This is MFS-type transporter ptmT from Penicillium ochrochloron.